Here is a 328-residue protein sequence, read N- to C-terminus: 4-hydroxy-3-methylbut-2-enyl diphosphate reductase (328 aa).

Residue Cys13 participates in [4Fe-4S] cluster binding. The (2E)-4-hydroxy-3-methylbut-2-enyl diphosphate site is built by His41 and His75. Positions 41 and 75 each coordinate dimethylallyl diphosphate. His41 and His75 together coordinate isopentenyl diphosphate. Position 97 (Cys97) interacts with [4Fe-4S] cluster. His125 lines the (2E)-4-hydroxy-3-methylbut-2-enyl diphosphate pocket. His125 provides a ligand contact to dimethylallyl diphosphate. His125 contributes to the isopentenyl diphosphate binding site. Residue Glu127 is the Proton donor of the active site. Thr168 contributes to the (2E)-4-hydroxy-3-methylbut-2-enyl diphosphate binding site. Cys225 lines the [4Fe-4S] cluster pocket. (2E)-4-hydroxy-3-methylbut-2-enyl diphosphate is bound by residues Ser253, Ser254, Asn255, and Ser302. 4 residues coordinate dimethylallyl diphosphate: Ser253, Ser254, Asn255, and Ser302. Residues Ser253, Ser254, Asn255, and Ser302 each coordinate isopentenyl diphosphate.

Belongs to the IspH family. It depends on [4Fe-4S] cluster as a cofactor.

It catalyses the reaction isopentenyl diphosphate + 2 oxidized [2Fe-2S]-[ferredoxin] + H2O = (2E)-4-hydroxy-3-methylbut-2-enyl diphosphate + 2 reduced [2Fe-2S]-[ferredoxin] + 2 H(+). The enzyme catalyses dimethylallyl diphosphate + 2 oxidized [2Fe-2S]-[ferredoxin] + H2O = (2E)-4-hydroxy-3-methylbut-2-enyl diphosphate + 2 reduced [2Fe-2S]-[ferredoxin] + 2 H(+). The protein operates within isoprenoid biosynthesis; dimethylallyl diphosphate biosynthesis; dimethylallyl diphosphate from (2E)-4-hydroxy-3-methylbutenyl diphosphate: step 1/1. It participates in isoprenoid biosynthesis; isopentenyl diphosphate biosynthesis via DXP pathway; isopentenyl diphosphate from 1-deoxy-D-xylulose 5-phosphate: step 6/6. Its function is as follows. Catalyzes the conversion of 1-hydroxy-2-methyl-2-(E)-butenyl 4-diphosphate (HMBPP) into a mixture of isopentenyl diphosphate (IPP) and dimethylallyl diphosphate (DMAPP). Acts in the terminal step of the DOXP/MEP pathway for isoprenoid precursor biosynthesis. The protein is 4-hydroxy-3-methylbut-2-enyl diphosphate reductase of Chlorobium chlorochromatii (strain CaD3).